Here is a 794-residue protein sequence, read N- to C-terminus: Potassium transporter 2 (794 aa).

Over 1–21 (MDLNLGKCCGSRSSKKESWRS) the chain is Cytoplasmic. The helical transmembrane segment at 22–42 (VLLLAYQSLGVVYGDLSISPL) threads the bilayer. The Extracellular portion of the chain corresponds to 43-64 (YVFKSTFAEDIQHSETNEEIYG). Residues 65-85 (VMSFVFWTLTLVPLLKYVFIV) form a helical membrane-spanning segment. The Cytoplasmic segment spans residues 86 to 153 (LRADDNGEGG…EKHKWLHTAL (68 aa)). A helical membrane pass occupies residues 154–174 (LLLVLLGTCMVIGDGLLTPAI). The Extracellular portion of the chain corresponds to 175 to 193 (SVFSAVSGLELNMSKEHHQ). The chain crosses the membrane as a helical span at residues 194–214 (YAVIPITCFILVCLFSLQHFG). Topologically, residues 215–217 (THR) are cytoplasmic. The chain crosses the membrane as a helical span at residues 218 to 238 (VGFVFAPIVLTWLLCISGIGL). Topologically, residues 239-265 (YNIIQWNPHIYKALSPTYMFMFLRKTR) are extracellular. Residues 266 to 286 (VSGWMSLGGILLCITGAEAMF) form a helical membrane-spanning segment. Topologically, residues 287–294 (ADLGHFNY) are cytoplasmic. Residues 295–315 (AAIQIAFTFLVYPALILAYMG) traverse the membrane as a helical segment. Topologically, residues 316 to 339 (QAAYLSRHHHSAHAIGFYVSVPKC) are extracellular. Residues 340–360 (LHWPVLAVAILASVVGSQAII) traverse the membrane as a helical segment. The Cytoplasmic portion of the chain corresponds to 361–391 (SGTFSIINQSQSLGCFPRVKVIHTSDKMHGQ). The chain crosses the membrane as a helical span at residues 392 to 412 (IYIPEINWMLMILCIAVTIGF). At 413–417 (RDVKH) the chain is on the extracellular side. The next 2 helical transmembrane spans lie at 418–438 (LGNASGLAVMAVMLVTTCLTS) and 439–459 (LVIVLCWHKPPILALAFLLFF). The Extracellular portion of the chain corresponds to 460–476 (GSIELLYFSASLTKFRE). The helical transmembrane segment at 477–497 (GAWLPILLSLIFMIIMFVWHY) threads the bilayer. Topologically, residues 498–794 (TTIKKYEFDL…LLEVGMVYVV (297 aa)) are cytoplasmic.

This sequence belongs to the HAK/KUP transporter (TC 2.A.72.3) family. In terms of tissue distribution, slightly detected in roots, stems, leaves and flowers of mature plants and in potassium-starved plants.

The protein resides in the cell membrane. Its function is as follows. Low-affinity potassium transporter. Could mediate the potassium-dependent cell expansion in growing tissues. This is Potassium transporter 2 (POT2) from Arabidopsis thaliana (Mouse-ear cress).